The chain runs to 487 residues: Cysteine--tRNA ligase (487 aa).

Zn(2+) is bound at residue Cys-27. The 'HIGH' region motif lies at 29 to 39 (ATVQGLPHVGH). The tract at residues 174-194 (IDDMQGAPDADPRGKKDPRDF) is disordered. The span at 183–194 (ADPRGKKDPRDF) shows a compositional bias: basic and acidic residues. 3 residues coordinate Zn(2+): Cys-225, His-250, and Glu-254. Positions 281–285 (KMSKS) match the 'KMSKS' region motif. Position 284 (Lys-284) interacts with ATP.

The protein belongs to the class-I aminoacyl-tRNA synthetase family. In terms of assembly, monomer. Zn(2+) is required as a cofactor.

The protein localises to the cytoplasm. The catalysed reaction is tRNA(Cys) + L-cysteine + ATP = L-cysteinyl-tRNA(Cys) + AMP + diphosphate. In Arthrobacter sp. (strain FB24), this protein is Cysteine--tRNA ligase.